The following is a 344-amino-acid chain: Phosphate acyltransferase (344 aa).

The protein belongs to the PlsX family. Homodimer. Probably interacts with PlsY.

It is found in the cytoplasm. It carries out the reaction a fatty acyl-[ACP] + phosphate = an acyl phosphate + holo-[ACP]. The protein operates within lipid metabolism; phospholipid metabolism. Catalyzes the reversible formation of acyl-phosphate (acyl-PO(4)) from acyl-[acyl-carrier-protein] (acyl-ACP). This enzyme utilizes acyl-ACP as fatty acyl donor, but not acyl-CoA. This Blochmanniella floridana protein is Phosphate acyltransferase.